We begin with the raw amino-acid sequence, 289 residues long: Type III pantothenate kinase (289 aa).

9–16 is a binding site for ATP; that stretch reads DAGNSRVK. Substrate-binding positions include Tyr-106 and 113 to 116; that span reads GSDR. The active-site Proton acceptor is Asp-115. Residue Thr-139 coordinates ATP. Position 209 (Thr-209) interacts with substrate.

This sequence belongs to the type III pantothenate kinase family. Homodimer. It depends on NH4(+) as a cofactor. K(+) is required as a cofactor.

It is found in the cytoplasm. It carries out the reaction (R)-pantothenate + ATP = (R)-4'-phosphopantothenate + ADP + H(+). Its pathway is cofactor biosynthesis; coenzyme A biosynthesis; CoA from (R)-pantothenate: step 1/5. Functionally, catalyzes the phosphorylation of pantothenate (Pan), the first step in CoA biosynthesis. The sequence is that of Type III pantothenate kinase from Paraburkholderia phymatum (strain DSM 17167 / CIP 108236 / LMG 21445 / STM815) (Burkholderia phymatum).